A 325-amino-acid chain; its full sequence is Lipid droplet-associated hydrolase (325 aa).

S139 serves as the catalytic Nucleophile. Active-site charge relay system residues include D271 and H300.

It belongs to the AB hydrolase superfamily. LDAH family.

The protein localises to the lipid droplet. It localises to the endoplasmic reticulum. The enzyme catalyses a cholesterol ester + H2O = cholesterol + a fatty acid + H(+). In terms of biological role, probable serine lipid hydrolase associated with lipid droplets. Has low cholesterol esterase activity. Appears to lack triglyceride lipase activity. Involved in cholesterol and triglyceride homeostasis; stimulates cellular triglyceride accumulation and cellular cholesterol release. Acts antagonistically with PNPLA2/ATGL in regulation of cellular lipid stores. May regulate triglyceride accumulation indirectly through stimulation of PNPLA2/ATGL ubiquitination and proteasomal degradation. Promotes microtubule-dependent lipid droplet fusion. Highly expressed in macrophage-rich areas in atherosclerotic lesions, suggesting that it could promote cholesterol ester turnover in macrophages. The sequence is that of Lipid droplet-associated hydrolase from Pongo abelii (Sumatran orangutan).